The chain runs to 254 residues: MQPIRVVLAGATGKVGQVLARALVQEPGFALTGAIARQGGGRNLAELVPLGGRPGPTVHGSLEEFLAAGGEADVLVDFSVAEAGRRTIPAAIEASIAPVVGTTGFQPGETETWAAMCRKRGLGGAFIANYAVGIMLLMRFAEEAHRFFPDVEIIEMHHKTKLDAPSGTALRTKARLERGRGDLAAAEVPVHSVRLPGLVAHQEVIFGGLGQTLTIRHDAPSREAYVPGVLMTCRWVLREKRVAFDLEEVAFPRT.

NAD(+) contacts are provided by residues 10–15 (GATGKV) and 101–103 (GTT). The active-site Proton donor/acceptor is His-157. Position 158 (His-158) interacts with (S)-2,3,4,5-tetrahydrodipicolinate. Residue Lys-161 is the Proton donor of the active site. Residue 167–168 (GT) coordinates (S)-2,3,4,5-tetrahydrodipicolinate.

This sequence belongs to the DapB family.

The protein localises to the cytoplasm. It catalyses the reaction (S)-2,3,4,5-tetrahydrodipicolinate + NAD(+) + H2O = (2S,4S)-4-hydroxy-2,3,4,5-tetrahydrodipicolinate + NADH + H(+). The enzyme catalyses (S)-2,3,4,5-tetrahydrodipicolinate + NADP(+) + H2O = (2S,4S)-4-hydroxy-2,3,4,5-tetrahydrodipicolinate + NADPH + H(+). Its pathway is amino-acid biosynthesis; L-lysine biosynthesis via DAP pathway; (S)-tetrahydrodipicolinate from L-aspartate: step 4/4. Its function is as follows. Catalyzes the conversion of 4-hydroxy-tetrahydrodipicolinate (HTPA) to tetrahydrodipicolinate. This chain is 4-hydroxy-tetrahydrodipicolinate reductase, found in Symbiobacterium thermophilum (strain DSM 24528 / JCM 14929 / IAM 14863 / T).